A 185-amino-acid polypeptide reads, in one-letter code: Threonylcarbamoyl-AMP synthase (185 aa).

Residues 4 to 185 (SWRVQQAARE…LATGEIVRPG (182 aa)) enclose the YrdC-like domain.

It belongs to the SUA5 family. TsaC subfamily.

It is found in the cytoplasm. It carries out the reaction L-threonine + hydrogencarbonate + ATP = L-threonylcarbamoyladenylate + diphosphate + H2O. Functionally, required for the formation of a threonylcarbamoyl group on adenosine at position 37 (t(6)A37) in tRNAs that read codons beginning with adenine. Catalyzes the conversion of L-threonine, HCO(3)(-)/CO(2) and ATP to give threonylcarbamoyl-AMP (TC-AMP) as the acyladenylate intermediate, with the release of diphosphate. The polypeptide is Threonylcarbamoyl-AMP synthase (Pseudomonas putida (strain W619)).